The chain runs to 267 residues: Cilia- and flagella-associated protein 300 (267 aa).

This sequence belongs to the CFAP300 family. In terms of assembly, interacts with DNAAF2.

It localises to the cytoplasm. The protein localises to the cytoskeleton. Its subcellular location is the cilium axoneme. In terms of biological role, cilium- and flagellum-specific protein that plays a role in axonemal structure organization and motility. May play a role in outer and inner dynein arm assembly. The chain is Cilia- and flagella-associated protein 300 from Bos taurus (Bovine).